Here is a 179-residue protein sequence, read N- to C-terminus: Large ribosomal subunit protein uL6 (179 aa).

This sequence belongs to the universal ribosomal protein uL6 family. In terms of assembly, part of the 50S ribosomal subunit.

Its function is as follows. This protein binds to the 23S rRNA, and is important in its secondary structure. It is located near the subunit interface in the base of the L7/L12 stalk, and near the tRNA binding site of the peptidyltransferase center. The protein is Large ribosomal subunit protein uL6 of Leptospira biflexa serovar Patoc (strain Patoc 1 / ATCC 23582 / Paris).